The following is a 3432-amino-acid chain: Genome polyprotein (3432 aa).

An interaction with host EXOC1 region spans residues 2-15; it reads TKKPGGPGKNRAIN. Residues 2 to 109 are Cytoplasmic-facing; the sequence is TKKPGGPGKN…RKQNKRGGNE (108 aa). Residues 37–72 form a hydrophobic; homodimerization of capsid protein C region; sequence LLDGRGPVRFVLALITFFKFTALAPTKALLGRWKAV. Positions 106 to 127 are cleaved as a propeptide — ER anchor for the capsid protein C, removed in mature form by serine protease NS3; sequence GGNEGSIMWLASLAVVIACAGA. A helical transmembrane segment spans residues 110 to 130; the sequence is GSIMWLASLAVVIACAGAMKL. The Extracellular portion of the chain corresponds to 131 to 253; that stretch reads SNFQGKLLMT…ATRYLMKTEN (123 aa). Asn-142 is a glycosylation site (N-linked (GlcNAc...) asparagine; by host). A helical membrane pass occupies residues 254-274; it reads WIIRNPGYAFLAAVLGWMLGS. Residues 275–279 are Cytoplasmic-facing; sequence NNGQR. Residues 280-294 form a helical membrane-spanning segment; that stretch reads VVFTILLLLVAPAYS. At 295–746 the chain is on the extracellular side; sequence FNCLGMGNRD…QVFGGAFRTL (452 aa). Intrachain disulfides connect Cys-297/Cys-324, Cys-354/Cys-410, Cys-354/Cys-415, Cys-368/Cys-399, Cys-386/Cys-410, and Cys-386/Cys-415. Residues 392-405 form a fusion peptide region; the sequence is DRGWGNGCGLFGKG. Asn-448 is a glycosylation site (N-linked (GlcNAc...) asparagine; by host). 2 cysteine pairs are disulfide-bonded: Cys-484-Cys-581 and Cys-598-Cys-629. A helical transmembrane segment spans residues 747–767; the sequence is FGGMSWITQGLMGALLLWMGV. Residues 768 to 773 lie on the Cytoplasmic side of the membrane; it reads NARDRS. A helical membrane pass occupies residues 774 to 794; the sequence is IALAFLATGGVLVFLATNVHA. Over 795 to 1219 the chain is Extracellular; that stretch reads DTGCAIDITR…AFAEANSGGD (425 aa). Cystine bridges form between Cys-798/Cys-809, Cys-849/Cys-937, Cys-973/Cys-1017, Cys-1074/Cys-1123, Cys-1085/Cys-1106, and Cys-1107/Cys-1110. Residues Asn-924 and Asn-1001 are each glycosylated (N-linked (GlcNAc...) asparagine; by host). A helical transmembrane segment spans residues 1220–1240; the sequence is VLHLALIAVFKIQPAFLVMNM. At 1241 to 1250 the chain is on the cytoplasmic side; that stretch reads LSTRWTNQEN. Residues 1251–1271 form a helical membrane-spanning segment; the sequence is VVLVLGAAFFQLASVDLQIGV. Residue His-1272 is a topological domain, lumenal. A helical membrane pass occupies residues 1273–1293; it reads GILNAAAIAWMIVRAITFPTT. At 1294 to 1309 the chain is on the cytoplasmic side; sequence SSVTMPVLALLTPGMR. Residues 1310–1330 form a helical membrane-spanning segment; sequence ALYLDTYRIILLVIGICSLLH. Residues 1331-1341 are Lumenal-facing; that stretch reads ERKKTMAKKKG. Residues 1342–1362 form a helical membrane-spanning segment; sequence AVLLGLALTSTGWFSPTTIAA. Topologically, residues 1363–1374 are cytoplasmic; it reads GLMVCNPNKKRG. Residues 1375–1395 traverse the membrane as a helical segment; that stretch reads WPATEFLSAVGLMFAIVGGLA. Over 1396–1398 the chain is Lumenal; the sequence is ELD. Residues 1399 to 1419 traverse the membrane as a helical segment; the sequence is IESMSIPFMLAGLMAVSYVVS. Topologically, residues 1420–1476 are cytoplasmic; it reads GKATDMWLERAADISWEMDAAITGSSRRLDVKLDDDGDFHLIDDPGVPWKVWVLRMS. Positions 1427–1466 are interacts with and activates NS3 protease; that stretch reads LERAADISWEMDAAITGSSRRLDVKLDDDGDFHLIDDPGV. Residues 1477-1497 constitute an intramembrane region (helical); that stretch reads CIGLAALTPWAIVPAAFGYWL. Topologically, residues 1498–2173 are cytoplasmic; sequence TLKTTKRGGV…RMALEELPDA (676 aa). The Peptidase S7 domain maps to 1505 to 1682; the sequence is GGVFWDTPSP…DRQEEPVPEA (178 aa). Active-site charge relay system; for serine protease NS3 activity residues include His-1555, Asp-1579, and Ser-1639. The Helicase ATP-binding domain occupies 1685–1841; that stretch reads PNMLRKRQMT…DSNAPIHDLQ (157 aa). The segment at 1689–1692 is important for RNA-binding; the sequence is RKRQ. ATP is bound at residue 1698-1705; that stretch reads LHPGSGKT. Residues 1789-1792 carry the DEAH box motif; it reads DEAH. A Helicase C-terminal domain is found at 1852–2017; that stretch reads GYEWITEYAG…GLVAQLYGPE (166 aa). An N6-acetyllysine; by host modification is found at Lys-1893. Residues 1950–1972 form a disordered region; the sequence is NPSPITSASAAQRRGRVGRNPNQ. Residues 2168–2172 are regulates the ATPase activity of NS3 helicase; that stretch reads EELPD. The helical transmembrane segment at 2174 to 2194 threads the bilayer; the sequence is LETITLIVAITVMTGGFFLLM. Over 2195 to 2199 the chain is Lumenal; that stretch reads MQRKG. Residues 2200–2220 constitute an intramembrane region (helical); the sequence is IGKMGLGALVLTLATFFLWAA. Glu-2221 is a topological domain (lumenal). The chain crosses the membrane as a helical span at residues 2222 to 2242; it reads VPGTKIAGTLLIALLLMVVLI. Residues 2243 to 2257 lie on the Cytoplasmic side of the membrane; that stretch reads PEPEKQRSQTDNQLA. Residues 2258 to 2278 traverse the membrane as a helical segment; it reads VFLICVLTVVGVVAANEYGML. Residues 2279-2311 lie on the Lumenal side of the membrane; the sequence is EKTKADLKSMFGGKTQASGLTGLPSMALDLRPA. An intramembrane region (helical) is located at residues 2312–2332; the sequence is TAWALYGGSTVVLTPLLKHLI. Residues 2333–2368 are Lumenal-facing; the sequence is TSEYVTTSLASINSQAGSLFVLPRGVPFTDLDLTVG. Residues 2369-2389 traverse the membrane as a helical segment; sequence LVFLGCWGQITLTTFLTAMVL. At 2390-2444 the chain is on the cytoplasmic side; the sequence is ATLHYGYMLPGWQAEALRAAQRRTAAGIMKNAVVDGMVATDVPELERTTPLMQKK. A helical membrane pass occupies residues 2445 to 2465; the sequence is VGQVLLIGVSVAAFLVNPNVT. Topologically, residues 2466-2469 are lumenal; that stretch reads TVRE. Residues 2470–2490 traverse the membrane as a helical segment; sequence AGVLVTAATLTLWDNGASAVW. The Cytoplasmic portion of the chain corresponds to 2491–3432; it reads NSTTATGLCH…DVLIQEDRVI (942 aa). Positions 2528-2793 constitute an mRNA cap 0-1 NS5-type MT domain; that stretch reads GRPGGRTLGE…DVNLGSGTRA (266 aa). An S-adenosyl-L-methionine-binding site is contributed by Ser-2583. Ser-2583 bears the Phosphoserine mark. Lys-2588 functions as the For 2'-O-MTase activity in the catalytic mechanism. 6 residues coordinate S-adenosyl-L-methionine: Gly-2613, Trp-2614, Thr-2631, Lys-2632, Asp-2658, and Val-2659. The For 2'-O-MTase activity role is filled by Asp-2673. Ile-2674 serves as a coordination point for S-adenosyl-L-methionine. Active-site for 2'-O-MTase activity residues include Lys-2709 and Glu-2745. Tyr-2747 is an S-adenosyl-L-methionine binding site. The Zn(2+) site is built by Glu-2967, His-2971, Cys-2976, and Cys-2979. Positions 3057–3209 constitute a RdRp catalytic domain; the sequence is GKMYADDTAG…KPLDDRFATA (153 aa). 3 residues coordinate Zn(2+): His-3244, Cys-3260, and Cys-3379.

This sequence in the N-terminal section; belongs to the class I-like SAM-binding methyltransferase superfamily. mRNA cap 0-1 NS5-type methyltransferase family. As to quaternary structure, homodimer. Interacts (via N-terminus) with host EXOC1 (via C-terminus); this interaction results in EXOC1 degradation through the proteasome degradation pathway. In terms of assembly, forms heterodimers with envelope protein E in the endoplasmic reticulum and Golgi. Homodimer; in the endoplasmic reticulum and Golgi. Interacts with protein prM. Interacts with non-structural protein 1. Interacts with host HSPA5. As to quaternary structure, homodimer; Homohexamer when secreted. Interacts with envelope protein E. NS1 interacts with NS4B. Interacts with host complement protein CFH; this interaction leads to the degradation of C3. In terms of assembly, interacts (via N-terminus) with serine protease NS3. Forms a heterodimer with serine protease NS3. May form homooligomers. As to quaternary structure, forms a heterodimer with NS2B. Interacts with non-structural protein 2A (via N-terminus). Interacts with NS4B. Interacts with unphosphorylated RNA-directed RNA polymerase NS5; this interaction stimulates RNA-directed RNA polymerase NS5 guanylyltransferase activity. Interacts with host ILF2. In terms of assembly, interacts with serine protease NS3. Homodimer. Interacts with host STAT2; this interaction inhibits the phosphorylation of the latter, and, when all viral proteins are present (polyprotein), targets STAT2 for degradation. Interacts with serine protease NS3. It depends on Mn(2+) as a cofactor. Requires Mg(2+) as cofactor. Post-translationally, specific enzymatic cleavages in vivo yield mature proteins. Cleavages in the lumen of endoplasmic reticulum are performed by host signal peptidase, whereas cleavages in the cytoplasmic side are performed by serine protease NS3. Signal cleavage at the 2K-4B site requires a prior NS3 protease-mediated cleavage at the 4A-2K site. Cleaved in post-Golgi vesicles by a host furin, releasing the mature small envelope protein M, and peptide pr. This cleavage is incomplete as up to 30% of viral particles still carry uncleaved prM. In terms of processing, N-glycosylated. Post-translationally, N-glycosylated. The excreted form is glycosylated and this is required for efficient secretion of the protein from infected cells. Acetylated by host KAT5. Acetylation modulates NS3 RNA-binding and unwinding activities and plays an important positive role for viral replication. In terms of processing, phosphorylated on serines residues. This phosphorylation may trigger NS5 nuclear localization.

The protein localises to the virion. It localises to the host nucleus. Its subcellular location is the host cytoplasm. It is found in the host perinuclear region. The protein resides in the secreted. The protein localises to the virion membrane. It localises to the host endoplasmic reticulum membrane. Its subcellular location is the host cell surface. The catalysed reaction is Selective hydrolysis of -Xaa-Xaa-|-Yaa- bonds in which each of the Xaa can be either Arg or Lys and Yaa can be either Ser or Ala.. The enzyme catalyses RNA(n) + a ribonucleoside 5'-triphosphate = RNA(n+1) + diphosphate. It catalyses the reaction a ribonucleoside 5'-triphosphate + H2O = a ribonucleoside 5'-diphosphate + phosphate + H(+). It carries out the reaction ATP + H2O = ADP + phosphate + H(+). The catalysed reaction is a 5'-end (5'-triphosphoguanosine)-ribonucleoside in mRNA + S-adenosyl-L-methionine = a 5'-end (N(7)-methyl 5'-triphosphoguanosine)-ribonucleoside in mRNA + S-adenosyl-L-homocysteine. The enzyme catalyses a 5'-end (N(7)-methyl 5'-triphosphoguanosine)-ribonucleoside in mRNA + S-adenosyl-L-methionine = a 5'-end (N(7)-methyl 5'-triphosphoguanosine)-(2'-O-methyl-ribonucleoside) in mRNA + S-adenosyl-L-homocysteine + H(+). In terms of biological role, plays a role in virus budding by binding to the cell membrane and gathering the viral RNA into a nucleocapsid that forms the core of a mature virus particle. During virus entry, may induce genome penetration into the host cytoplasm after hemifusion induced by the surface proteins. Can migrate to the cell nucleus where it modulates host functions. Overcomes the anti-viral effects of host EXOC1 by sequestering and degrading the latter through the proteasome degradation pathway. Its function is as follows. Inhibits RNA silencing by interfering with host Dicer. Prevents premature fusion activity of envelope proteins in trans-Golgi by binding to envelope protein E at pH6.0. After virion release in extracellular space, gets dissociated from E dimers. Functionally, acts as a chaperone for envelope protein E during intracellular virion assembly by masking and inactivating envelope protein E fusion peptide. prM is the only viral peptide matured by host furin in the trans-Golgi network probably to avoid catastrophic activation of the viral fusion activity in acidic Golgi compartment prior to virion release. prM-E cleavage is inefficient, and many virions are only partially matured. These uncleaved prM would play a role in immune evasion. In terms of biological role, may play a role in virus budding. Exerts cytotoxic effects by activating a mitochondrial apoptotic pathway through M ectodomain. May display a viroporin activity. Its function is as follows. Binds to host cell surface receptor and mediates fusion between viral and cellular membranes. Efficient virus attachment to cell is, at least in part, mediated by host HSPA5. Envelope protein is synthesized in the endoplasmic reticulum in the form of heterodimer with protein prM. They play a role in virion budding in the ER, and the newly formed immature particle is covered with 60 spikes composed of heterodimer between precursor prM and envelope protein E. The virion is transported to the Golgi apparatus where the low pH causes dissociation of PrM-E heterodimers and formation of E homodimers. prM-E cleavage is inefficient, and many virions are only partially matured. These uncleaved prM would play a role in immune evasion. Involved in immune evasion, pathogenesis and viral replication. Once cleaved off the polyprotein, is targeted to three destinations: the viral replication cycle, the plasma membrane and the extracellular compartment. Essential for viral replication. Required for formation of the replication complex and recruitment of other non-structural proteins to the ER-derived membrane structures. Excreted as a hexameric lipoparticle that plays a role against host immune response. Antagonizing the complement function. Binds to the host macrophages and dendritic cells. Inhibits signal transduction originating from Toll-like receptor 3 (TLR3). Functionally, component of the viral RNA replication complex that functions in virion assembly and antagonizes the host alpha/beta interferon antiviral response. In terms of biological role, required cofactor for the serine protease function of NS3. May have membrane-destabilizing activity and form viroporins. Its function is as follows. Displays three enzymatic activities: serine protease, NTPase and RNA helicase. NS3 serine protease, in association with NS2B, performs its autocleavage and cleaves the polyprotein at dibasic sites in the cytoplasm: C-prM, NS2A-NS2B, NS2B-NS3, NS3-NS4A, NS4A-2K and NS4B-NS5. NS3 RNA helicase binds RNA and unwinds dsRNA in the 3' to 5' direction. Regulates the ATPase activity of the NS3 helicase activity. NS4A allows NS3 helicase to conserve energy during unwinding. Functionally, functions as a signal peptide for NS4B and is required for the interferon antagonism activity of the latter. In terms of biological role, induces the formation of ER-derived membrane vesicles where the viral replication takes place. Inhibits interferon (IFN)-induced host STAT1 phosphorylation and nuclear translocation, thereby preventing the establishment of cellular antiviral state by blocking the IFN-alpha/beta pathway. Inhibits STAT2 translocation in the nucleus after IFN-alpha treatment. Its function is as follows. Replicates the viral (+) and (-) RNA genome. Performs the capping of genomes in the cytoplasm. NS5 methylates viral RNA cap at guanine N-7 and ribose 2'-O positions. Besides its role in RNA genome replication, also prevents the establishment of cellular antiviral state by blocking the interferon-alpha/beta (IFN-alpha/beta) signaling pathway. Inhibits host TYK2 and STAT2 phosphorylation, thereby preventing activation of JAK-STAT signaling pathway. In Ardeidae (herons), this protein is Genome polyprotein.